Here is a 267-residue protein sequence, read N- to C-terminus: uncharacterized protein (267 aa).

2 positions are modified to phosphoserine: Ser-210 and Ser-224.

Testis. Down-regulated in men with spermatocyte arrest.

Its function is as follows. Essential for normal spermatogenesis and male fertility. This is an uncharacterized protein from Homo sapiens (Human).